Reading from the N-terminus, the 130-residue chain is Small ribosomal subunit protein uS11c (130 aa).

Belongs to the universal ribosomal protein uS11 family. Part of the 30S ribosomal subunit.

It is found in the plastid. The protein localises to the chloroplast. The polypeptide is Small ribosomal subunit protein uS11c (Zygnema circumcarinatum (Green alga)).